The primary structure comprises 310 residues: GTPase Era (310 aa).

Positions 17-184 (RSGFVALIGA…MDYLAERLPE (168 aa)) constitute an Era-type G domain. The segment at 25-32 (GATNAGKS) is G1. Position 25–32 (25–32 (GATNAGKS)) interacts with GTP. Residues 51–55 (QTTRA) form a G2 region. The tract at residues 72–75 (DTPG) is G3. GTP is bound by residues 72-76 (DTPGI) and 134-137 (NKVD). The segment at 134–137 (NKVD) is G4. The segment at 163-165 (ISA) is G5. The KH type-2 domain occupies 215 to 292 (LHQELPYASH…HLFLFVKVRE (78 aa)).

This sequence belongs to the TRAFAC class TrmE-Era-EngA-EngB-Septin-like GTPase superfamily. Era GTPase family. In terms of assembly, monomer.

The protein localises to the cytoplasm. The protein resides in the cell inner membrane. An essential GTPase that binds both GDP and GTP, with rapid nucleotide exchange. Plays a role in 16S rRNA processing and 30S ribosomal subunit biogenesis and possibly also in cell cycle regulation and energy metabolism. The sequence is that of GTPase Era from Sinorhizobium medicae (strain WSM419) (Ensifer medicae).